Consider the following 553-residue polypeptide: Methionine--tRNA ligase (553 aa).

The 'HIGH' region signature appears at 12–22 (PYANSQLHLGH). Cysteine 144, cysteine 147, cysteine 157, and cysteine 160 together coordinate Zn(2+). Positions 332–336 (KFSKS) match the 'KMSKS' region motif. Lysine 335 lines the ATP pocket.

The protein belongs to the class-I aminoacyl-tRNA synthetase family. MetG type 1 subfamily. In terms of assembly, monomer. Requires Zn(2+) as cofactor.

Its subcellular location is the cytoplasm. It carries out the reaction tRNA(Met) + L-methionine + ATP = L-methionyl-tRNA(Met) + AMP + diphosphate. In terms of biological role, is required not only for elongation of protein synthesis but also for the initiation of all mRNA translation through initiator tRNA(fMet) aminoacylation. The protein is Methionine--tRNA ligase of Dehalococcoides mccartyi (strain ATCC BAA-2266 / KCTC 15142 / 195) (Dehalococcoides ethenogenes (strain 195)).